A 38-amino-acid chain; its full sequence is Toxic protein TimP (38 aa).

Residues 1 to 20 (MKVRCFCVVLLVSGTLCLHA) are membrane-embedded.

This sequence belongs to the TimP toxin family.

The protein localises to the cell inner membrane. Functionally, toxic component of a probable type I toxin-antitoxin (TA) system. Neutralized by sRNA antitoxin TimR which binds to the 5' UTR of timP mRNA and inhibits translation. When TimP is expressed from its promoter in the absence of antitoxin leads to mild cell stress; overexpression in situ is toxic to the cell and causes membrane leakage. The antitoxin gene is encoded immediately upstream and transcribed divergently from the toxin gene; antitoxin RNA is less stable than timP mRNA. This chain is Toxic protein TimP, found in Salmonella typhimurium (strain SL1344).